We begin with the raw amino-acid sequence, 273 residues long: Large ribosomal subunit protein uL2c (273 aa).

A compositionally biased stretch (polar residues) spans M1–I31. Disordered stretches follow at residues M1 to G53 and M222 to K273.

It belongs to the universal ribosomal protein uL2 family. Part of the 50S ribosomal subunit.

It localises to the plastid. It is found in the chloroplast. This is Large ribosomal subunit protein uL2c (rpl2) from Pisum sativum (Garden pea).